A 158-amino-acid polypeptide reads, in one-letter code: Large ribosomal subunit protein bL17 (158 aa).

The interval 119-158 (APAAAPEAEEKGEKKAAKAPKAEKAPKAEKKPAKKAAKAE) is disordered. The span at 126–158 (AEEKGEKKAAKAPKAEKAPKAEKKPAKKAAKAE) shows a compositional bias: basic and acidic residues.

This sequence belongs to the bacterial ribosomal protein bL17 family. In terms of assembly, part of the 50S ribosomal subunit. Contacts protein L32.

The chain is Large ribosomal subunit protein bL17 from Anaeromyxobacter sp. (strain K).